Here is an 865-residue protein sequence, read N- to C-terminus: AP-1 complex subunit gamma-1 (865 aa).

The disordered stretch occupies residues 665 to 690 (AEPLETPVDEMTQSPQSSLSRAPSTS). Residues 675–690 (MTQSPQSSLSRAPSTS) show a composition bias toward polar residues. Residues 746–860 (KSYPPIVVFD…LDQVDFGKLP (115 aa)) form the GAE domain.

The protein belongs to the adaptor complexes large subunit family. Adaptor protein complex 1 (AP-1) is a heterotetramer composed of two large adaptins (gamma-type subunit apl4 and beta-type subunit apl2), a medium adaptin (mu-type subunit apm1) and a small adaptin (sigma-type subunit aps1). AP-1 interacts with clathrin.

It localises to the cytoplasmic vesicle. Its subcellular location is the clathrin-coated vesicle membrane. The protein resides in the golgi apparatus. Adaptins are components of the adaptor complexes which link clathrin to receptors in coated vesicles. Clathrin-associated protein complexes are believed to interact with the cytoplasmic tails of membrane proteins, leading to their selection and concentration. The AP-1 complex interacts directly with clathrin. The polypeptide is AP-1 complex subunit gamma-1 (apl4) (Schizosaccharomyces pombe (strain 972 / ATCC 24843) (Fission yeast)).